The chain runs to 935 residues: C-1-tetrahydrofolate synthase, cytoplasmic (935 aa).

M1 bears the N-acetylmethionine mark. The segment at 2–291 (APAGILNGKL…MLMQSTVESA (290 aa)) is methylenetetrahydrofolate dehydrogenase and methenyltetrahydrofolate cyclohydrolase (D/C) domain. Residues 52–56 (YINVK) and 99–101 (VQL) contribute to the substrate site. K56 is a catalytic residue. NADP(+)-binding positions include 172-174 (GRS) and S197. 272–276 (PGGVG) provides a ligand contact to substrate. Positions 310–935 (LNLKTPVPSD…PETEQVNGLF (626 aa)) are formyltetrahydrofolate synthetase domain. S318 bears the Phosphoserine mark. Position 380 to 387 (380 to 387 (TPLGEGKS)) interacts with ATP. Residues S413 and S490 each carry the phosphoserine modification.

The protein in the N-terminal section; belongs to the tetrahydrofolate dehydrogenase/cyclohydrolase family. It in the C-terminal section; belongs to the formate--tetrahydrofolate ligase family. As to quaternary structure, homodimer.

The protein localises to the cytoplasm. The enzyme catalyses (6R)-5,10-methylene-5,6,7,8-tetrahydrofolate + NADP(+) = (6R)-5,10-methenyltetrahydrofolate + NADPH. It carries out the reaction (6R)-5,10-methenyltetrahydrofolate + H2O = (6R)-10-formyltetrahydrofolate + H(+). The catalysed reaction is (6S)-5,6,7,8-tetrahydrofolate + formate + ATP = (6R)-10-formyltetrahydrofolate + ADP + phosphate. It functions in the pathway one-carbon metabolism; tetrahydrofolate interconversion. Functionally, trifunctional enzyme that catalyzes the interconversion of three forms of one-carbon-substituted tetrahydrofolate: (6R)-5,10-methylene-5,6,7,8-tetrahydrofolate, 5,10-methenyltetrahydrofolate and (6S)-10-formyltetrahydrofolate. These derivatives of tetrahydrofolate are differentially required in nucleotide and amino acid biosynthesis, (6S)-10-formyltetrahydrofolate being required for purine biosynthesis while (6R)-5,10-methylene-5,6,7,8-tetrahydrofolate is used for serine and methionine biosynthesis for instance. This is C-1-tetrahydrofolate synthase, cytoplasmic (Mthfd1) from Mus musculus (Mouse).